Reading from the N-terminus, the 419-residue chain is Histidine--tRNA ligase (419 aa).

It belongs to the class-II aminoacyl-tRNA synthetase family. Homodimer.

Its subcellular location is the cytoplasm. The enzyme catalyses tRNA(His) + L-histidine + ATP = L-histidyl-tRNA(His) + AMP + diphosphate + H(+). The protein is Histidine--tRNA ligase of Mycoplasmoides gallisepticum (strain R(low / passage 15 / clone 2)) (Mycoplasma gallisepticum).